Here is a 199-residue protein sequence, read N- to C-terminus: Protein ASYMMETRIC LEAVES 2 (199 aa).

Residues 8-109 (SPCAACKFLR…IDLSCAKSEL (102 aa)) form the LOB domain.

The protein belongs to the LOB domain-containing protein family. In terms of assembly, homo- and heterodimer with AS1. Interacts with AS1. Part of the AS1 repressor complex composed of AS1, LBD6/AS2 and HDA6. Interacts with LFR. Expressed in young shoots, roots, stems, leaves, flowers and adaxial domains of cotyledonary and leaves primordia.

The protein resides in the nucleus. Functionally, negative regulator of cell proliferation in the adaxial side of leaves. Regulates the formation of a symmetric lamina and the establishment of venation. Positively regulates LATERAL ORGAN BOUNDARIES (LOB) within the shoot apex, and the class III HD-ZIP genes REV, PHB, and PHV. Interacts directly with ASYMMETRIC LEAVES 1 (AS1) to repress the knox homeobox genes KNAT1, KNAT2, and KNAT6 and the abaxial determinants ARF3, KAN2 and YAB5. May act in parallel with the RDR6-SGS3-AGO7 pathway, an endogenous RNA silencing pathway, to regulate the leaf morphogenesis. Required for the binding of AS1 to the KNOX genes. Involved in leaf polarity establishment by functioning cooperatively with RH10 or RID2 to repress abaxial genes ARF3, ARF4, KAN1, KAN2, YAB1 and YAB5, and the knox homeobox genes KNAT1, KNAT2, KNAT6, and STM to promote adaxial development in leaf primordia at shoot apical meristems at high temperatures. The sequence is that of Protein ASYMMETRIC LEAVES 2 from Arabidopsis thaliana (Mouse-ear cress).